The primary structure comprises 193 residues: Ion-translocating oxidoreductase complex subunit B (193 aa).

Positions 1-26 (MSTMLIAVILLTLLALFFGVLLGFAA) are hydrophobic. The region spanning 32–90 (EGNPIVDELEAILPQTQCGQCGYPGCRPYAEAIANGDKVNKCPPGGTATMEKLASLMGV) is the 4Fe-4S domain. Positions 49, 52, 57, 73, 114, 117, 120, 124, 144, 147, 150, and 154 each coordinate [4Fe-4S] cluster. 2 consecutive 4Fe-4S ferredoxin-type domains span residues 105-134 (KVAYIREDECIGCTKCIQACPVDAIIGAGK) and 136-164 (MHTVLTADCTGCDLCVEPCPVDCIDMLPV).

Belongs to the 4Fe4S bacterial-type ferredoxin family. RnfB subfamily. As to quaternary structure, the complex is composed of six subunits: RnfA, RnfB, RnfC, RnfD, RnfE and RnfG. The cofactor is [4Fe-4S] cluster.

Its subcellular location is the cell inner membrane. Its function is as follows. Part of a membrane-bound complex that couples electron transfer with translocation of ions across the membrane. This is Ion-translocating oxidoreductase complex subunit B from Shewanella sp. (strain MR-4).